The sequence spans 284 residues: Protein SCO1 homolog, mitochondrial (284 aa).

Residues 46–73 (RAFSAGPPPPGAGPEPKGGQAGSHRPKP) are disordered. A helical membrane pass occupies residues 81–98 (LALTFAIGGSLLAGMKYF). At 99 to 284 (KKEKIEKLEK…AHMRSHMKKR (186 aa)) the chain is on the mitochondrial intermembrane side. An important for dimerization region spans residues 101–114 (EKIEKLEKQRHRSI). Residues C152, C156, and H243 each coordinate Cu cation. An intrachain disulfide couples C152 to C156.

The protein belongs to the SCO1/2 family. In terms of assembly, homodimer. Interacts with COA6. Found in a complex with TMEM177, COX20, COA6, MT-CO2/COX2, COX18 and SCO2. Interacts with TMEM177 in a COX20-dependent manner. Interacts with COX20 in a MT-CO2/COX2- and COX18-dependent manner. Interacts with COX16.

The protein resides in the mitochondrion. Its subcellular location is the mitochondrion inner membrane. Its function is as follows. Copper metallochaperone essential for the maturation of cytochrome c oxidase subunit II (MT-CO2/COX2). Not required for the synthesis of MT-CO2/COX2 but plays a crucial role in stabilizing MT-CO2/COX2 during its subsequent maturation. Involved in transporting copper to the Cu(A) site on MT-CO2/COX2. Plays an important role in the regulation of copper homeostasis by controlling the abundance and cell membrane localization of copper transporter CTR1. In Mus musculus (Mouse), this protein is Protein SCO1 homolog, mitochondrial (Sco1).